The primary structure comprises 147 residues: uncharacterized protein (147 aa).

A helical membrane pass occupies residues 3 to 23; that stretch reads APMIGMVVLVVVLGLAVLALS.

To M.leprae ML1147.

The protein localises to the membrane. This is an uncharacterized protein from Mycobacterium tuberculosis (strain CDC 1551 / Oshkosh).